Consider the following 84-residue polypeptide: Large ribosomal subunit protein bL27 (84 aa).

A disordered region spans residues 1–22 (MAHKKGGGSTKNGRDSNPKYLG).

This sequence belongs to the bacterial ribosomal protein bL27 family.

This Prosthecochloris aestuarii (strain DSM 271 / SK 413) protein is Large ribosomal subunit protein bL27.